A 249-amino-acid polypeptide reads, in one-letter code: NAD kinase (249 aa).

D49 serves as the catalytic Proton acceptor. Residues 49-50 (DG), R54, 115-116 (NE), K126, R143, D145, I153, 156-161 (TGYAFS), A180, and Q211 each bind NAD(+).

Belongs to the NAD kinase family. Homotetramer. The cofactor is a divalent metal cation.

The protein resides in the cytoplasm. It carries out the reaction NAD(+) + ATP = ADP + NADP(+) + H(+). Its function is as follows. Involved in the regulation of the intracellular balance between NAD(H) and NADP(H), and is a key enzyme in the biosynthesis of NADP. Catalyzes specifically the phosphorylation on 2'-hydroxyl of the adenosine moiety of NAD to yield NADP. This chain is NAD kinase, found in Archaeoglobus fulgidus (strain ATCC 49558 / DSM 4304 / JCM 9628 / NBRC 100126 / VC-16).